Here is a 470-residue protein sequence, read N- to C-terminus: Calcium/manganese antiporter SLC30A10 (470 aa).

Residues 1–10 (MGRYSGKTCR) are Cytoplasmic-facing. The chain crosses the membrane as a helical span at residues 11 to 31 (LLFMLVLTAAFFVAELVSGYL). Residues 32-34 (GNS) are Extracellular-facing. The helical transmembrane segment at 35 to 55 (IALLSDSFNMLSDLISLCVGL) threads the bilayer. Residues 56 to 81 (GSGYIARRGPRGSSATYGYVRAEVVG) are Cytoplasmic-facing. A helical membrane pass occupies residues 82-102 (ALSNAVFLTALCFTIFVEAVL). The Extracellular portion of the chain corresponds to 103 to 113 (RLARPERIDDP). A helical membrane pass occupies residues 114 to 134 (ELVLIVGALGLAVNVVGLLIF). Topologically, residues 135–233 (QDCGACFSRC…KSEALNIRGV (99 aa)) are cytoplasmic. The segment at 146–223 (RGRRTRPSQQ…EPEETTKKEK (78 aa)) is disordered. The span at 171-184 (AATATAPGSGTAVT) shows a compositional bias: low complexity. A helical membrane pass occupies residues 234–254 (LLHVMGDALGSVVVVITAIIF). Over 255–270 (YVQPLRREDPCNWQCY) the chain is Extracellular. Residues 271–291 (IDPSLTVVMVIIILSSAFPLI) traverse the membrane as a helical segment. Residues 292–470 (KETAVILLQM…RQHYENSTHF (179 aa)) are Cytoplasmic-facing. Residues 300–470 (QMVPKGVNME…RQHYENSTHF (171 aa)) are required for plasma membrane localization. A disordered region spans residues 451 to 470 (QGQTLSKTQERQHYENSTHF). Over residues 458–470 (TQERQHYENSTHF) the composition is skewed to basic and acidic residues.

This sequence belongs to the cation diffusion facilitator (CDF) transporter (TC 2.A.4) family. SLC30A subfamily. Forms homodimers. Forms heterodimers and high-molecular weight oligomers with SLC30A3, SLC30A2 and SLC30A4; heterodimerization is mediated by covalent-bound tyrosine residues, occurs probably in a tissue-specific manner and could mediate the intracellular zinc transport activity into early endosomes and recycling endosomes. Specifically expressed in fetal liver and fetal brain.

The protein localises to the cell membrane. It localises to the golgi apparatus membrane. It is found in the recycling endosome membrane. Its subcellular location is the early endosome membrane. It catalyses the reaction Mn(2+)(out) + Ca(2+)(in) = Mn(2+)(in) + Ca(2+)(out). The catalysed reaction is Zn(2+)(in) = Zn(2+)(out). Calcium:manganese antiporter of the plasma membrane mediating the efflux of intracellular manganese coupled to an active extracellular calcium exchange. Required for intracellular manganese homeostasis, an essential cation for the function of several enzymes, including some crucially important for the metabolism of neurotransmitters and other neuronal metabolic pathways. Manganese can also be cytotoxic and induce oxidative stress, mitochondrial dysfunction and apoptosis. Could also have an intracellular zinc ion transporter activity, directly regulating intracellular zinc ion homeostasis and more indirectly various signaling pathway and biological processes. This chain is Calcium/manganese antiporter SLC30A10, found in Mus musculus (Mouse).